Here is a 314-residue protein sequence, read N- to C-terminus: Homoserine O-acetyltransferase (314 aa).

Catalysis depends on Cys-142, which acts as the Acyl-thioester intermediate. Substrate contacts are provided by Lys-163 and Ser-192. His-235 serves as the catalytic Proton acceptor. Glu-237 is a catalytic residue. Arg-249 is a binding site for substrate.

Belongs to the MetA family.

It localises to the cytoplasm. The enzyme catalyses L-homoserine + acetyl-CoA = O-acetyl-L-homoserine + CoA. The protein operates within amino-acid biosynthesis; L-methionine biosynthesis via de novo pathway; O-acetyl-L-homoserine from L-homoserine: step 1/1. Its function is as follows. Transfers an acetyl group from acetyl-CoA to L-homoserine, forming acetyl-L-homoserine. The sequence is that of Homoserine O-acetyltransferase from Streptococcus pneumoniae serotype 4 (strain ATCC BAA-334 / TIGR4).